The primary structure comprises 1098 residues: MLNGLTRVSTSSELESILDIVQSSGEIAVVFTSPSIGDLETITSETQRRQLRIAGIPRGGYTILPAIPLYDDELLQMCERYTSANEYEKAEMRNSLYMREYPLFTYSIRHQRALFHPADYVSRILQFCSYYVQAPDADVLPLQDKSPFLHISPIKEICKHLRLIARGTPVAPDDSESPVPEQLRLHAESDAEKLAAERATAMSIATSSGGASETEQPSLFSGVAPSALFQKGAVEEVDKDAEDTMEDLTGEETVDAVHSFQAEYLTLDGFELVTKASIYYDREGEGQRVVAVYIPGGVPEDTCRAAAAVLEPAATKKNLRAPTNGGLPPDTGIVGYYDYLTNPTQHKCRETEYSRRNWGLLAQSEPLLKHLDKLYSQLAPMHHHLQRVAIPSQYQLCGTVFSTITVNRNFRTAVHTDKGDFRSGLGVLSVINGEFEGCHLAIKRLKKAFQLKVGDVLLFDTSLEHGNTEVVNPEIHWQRTSVVCYLRTGLMSSVCEMERRKHLNRLILLQLLNTEVRNTTVNINGADSSLPPLFVPTRLASHLAPVQLAALGFIVERTEKQSGCVVAMTMGLGKTLVALTLCFSQLHLAPQADILILTPKPIISHWVDEKNKWGMHGLHFPHFVASDGLNSLEFEQQLLEYERQRNNEKPKLGHIFVINGEYLAGFLRRFKRFTPLLMIVDEGHRVAAKGNKLTESLDRLRCNLRIVLSGTPLQNDASELYRLVGWVNKGVSRVLPPKRFQELANDINQFVEGDDGAFYNAVMAQEYIQDWMRGFVFREMENDLPPLHDYLLICGSSDVQREYEEKLGLTETAMTALKATEHRPHHLSTHPACYLAFISDSYQSMVSGWTVRAQSNTSRPRVSQLEEIDTMRLEQYVQLVENEQLDAFIDLSGKMRVLVDIVLRVQARKEKLIIFSLYVGSQDLIHRTLTALRVCTFTVRGRDSQDRRRRAMQEFSENKDLIVLVLSTKIAAYGLDFTAANHVVLFDSWWNPQVDAQAIARAYRRNQRKPVTVYRLISATENKFVLRSQTRKIALFKCILHERTSRQALPDELEDCAANEKDEERRIFWAKLKTTSLAGDSRALLNVYRYQESVRESE.

Residues 1–540 (MLNGLTRVST…PPLFVPTRLA (540 aa)) form a thymine dioxygenase region. The Fe cation site is built by His415, Asp417, and His465. Arg479 contacts 2-oxoglutarate. A DNA Helicase region spans residues 541–1098 (SHLAPVQLAA…RYQESVRESE (558 aa)). Residues 555 to 730 (VERTEKQSGC…YRLVGWVNKG (176 aa)) enclose the Helicase ATP-binding domain. Residue 568–575 (MTMGLGKT) participates in ATP binding. The short motif at 681-684 (DEGH) is the DEAH box element. Residues 897–1057 (VLVDIVLRVQ…ALPDELEDCA (161 aa)) enclose the Helicase C-terminal domain.

The protein in the C-terminal section; belongs to the SNF2/RAD54 helicase family. It in the N-terminal section; belongs to the TET family. JBP2 subfamily. Requires Fe(2+) as cofactor.

It is found in the nucleus. It carries out the reaction ATP + H2O = ADP + phosphate + H(+). The catalysed reaction is thymine + 2-oxoglutarate + O2 = 5-hydroxymethyluracil + succinate + CO2. Functionally, dioxygenase that catalyzes the first step of DNA base J (beta-d-glucosyl-HOMedU) biosynthesis by converting thymine to 5-hydroxymethyluracil (HOMedU). DNA base J is a hypermodified thymidine residue found in the genome of kinetoplastid parasites, which is localized primarily to repetitive DNA, namely the telomeres, and is implicated in the regulation of antigenic variation. Probably also acts as a DNA helicase. Recognizes and binds specific regions of the genome, hydrolyzes ATP and allows the DNA base J de novo synthesis. Involved in initial synthesis of DNA base J, JBP1 being able to act via the basal level of DNA base J and propagate further synthesis. In contrast to JBP1, it does not specifically bind DNA base J, however it binds chromatin. The protein is Bifunctional helicase and thymine dioxygenase JBP2 (JBP2) of Leishmania infantum.